The chain runs to 399 residues: MAPKTKSRLVDQPPSASSSEEQELVEESQEEEEQQSREEEGEEESGEETEEDEEPKTAHPVVKKPISQKLVQTPQKPQFSSESGSENGSGSDSEAESGNSLPSPSASDFTVKPNVAAKAATPSKPAAKRPQEAQKEKGKKKPKIAEEEEKKSPATPRSLWSDDDQLALLKGILEYKTVKGMEPSADMSAFHEFIRGKLQAEVSKSQISDKVRRLKKKFLTNVKDGEEPVFKKGQDFLIFEHSKRIWGAPGISNGGVKDNVNNTSNGKAKKTVEVKKSSEPKKSAKVSKPKDDEKQKEEEQQVAVKEVVKEDIVKGDQQDFQSKYPRLAASLETMSGLSTMYPNGSSLLKENMSLIATDKAKVLEEKWKKLEDDEAALMVKRLDFIAEHYRLVVDAMRGN.

2 disordered regions span residues 1–160 (MAPK…RSLW) and 250–301 (GISN…EEQQ). A compositionally biased stretch (acidic residues) spans 20 to 54 (EEQELVEESQEEEEQQSREEEGEEESGEETEEDEE). The segment covering 69 to 79 (KLVQTPQKPQF) has biased composition (polar residues). Low complexity-rich tracts occupy residues 80-100 (SSES…SGNS) and 116-125 (AAKAATPSKP). Basic and acidic residues-rich tracts occupy residues 143-152 (KIAEEEEKKS) and 270-299 (KTVE…KEEE).

The protein belongs to the GeBP family. As to expression, expressed in tubers and in leaves treated with sucrose.

The protein localises to the nucleus. Functionally, may act as a transcriptional regulator. Binds specifically to the B-box motif, a promoter element that is required for the tuber-specific and sucrose inducible expression of the patatin gene. The protein is STOREKEEPER protein of Solanum tuberosum (Potato).